The primary structure comprises 394 residues: Monoterpene synthase FDS-5, chloroplastic (394 aa).

The N-terminal 65 residues, 1 to 65 (MASFISLSSK…NLNSQFMQVY (65 aa)), are a transit peptide targeting the chloroplast. Residues lysine 100, arginine 103, and glutamine 138 each coordinate isopentenyl diphosphate. Mg(2+)-binding residues include aspartate 145 and aspartate 149. The DDXXD motif motif lies at 145–149 (DDMMD). Arginine 154 contributes to the dimethylallyl diphosphate binding site. Arginine 155 lines the isopentenyl diphosphate pocket. Dimethylallyl diphosphate is bound by residues lysine 242, glutamine 281, lysine 298, and lysine 307.

The protein belongs to the FPP/GGPP synthase family. It depends on Mg(2+) as a cofactor. Mn(2+) serves as cofactor.

It localises to the plastid. The protein resides in the chloroplast. The enzyme catalyses isopentenyl diphosphate + dimethylallyl diphosphate = (2E)-geranyl diphosphate + diphosphate. It catalyses the reaction 2 dimethylallyl diphosphate = (R,R)-chrysanthemyl diphosphate + diphosphate. The catalysed reaction is 2 dimethylallyl diphosphate = (R)-lavandulyl diphosphate + diphosphate. Its function is as follows. Condenses two molecules of dimethylallyl diphosphate (DMAPP) to produce mainly an irregular monoterpene, chrysanthemyl diphosphate (CPP) and lower amounts of a branched monoterpene, lavandulyl diphosphate (LPP). CPP is a precursor of the pyrethrin insecticides. When incubated with isopentenyl diphosphate (IPP) and DMAPP, catalyzes three competing isoprenoid condensation reactions, a chain elongation to give geranyl diphosphate (GPP), a cyclopropanation to give CPP and a branching to give LPP. This Artemisia spiciformis (Spiked big sagebrush) protein is Monoterpene synthase FDS-5, chloroplastic (FDS-5).